Here is a 1107-residue protein sequence, read N- to C-terminus: Voltage-gated delayed rectifier potassium channel KCNH8 (1107 aa).

Residues 1–225 (MPVMKGLLAP…HFSTFKAGWD (225 aa)) are Cytoplasmic-facing. The PAS domain maps to 18-90 (IATRFDGTHS…LQIEKSLEEK (73 aa)). The PAC domain maps to 93–145 (FKGEIMFYKKNGSPFWCLLDIVPIKNEKGDVVLFLASFKDITDTKVKITPEDK). The helical transmembrane segment at 226–246 (WLILLATFYVAVTVPYNVCFI) threads the bilayer. The Extracellular segment spans residues 247-255 (GNDDLSTTR). The chain crosses the membrane as a helical span at residues 256-276 (STTVSDIAVEILFIIDIILNF). The Cytoplasmic segment spans residues 277–298 (RTTYVSKSGQVIFEARSICIHY). A helical membrane pass occupies residues 299 to 319 (VTTWFIIDLIAALPFDLLYAF). The N-linked (GlcNAc...) asparagine glycan is linked to N320. Residues 320–327 (NVTVVSLV) are Extracellular-facing. Residues 328-348 (HLLKTVRLLRLLRLLQKLDRY) traverse the membrane as a helical; Voltage-sensor segment. Topologically, residues 349–357 (SQHSTIVLT) are cytoplasmic. The chain crosses the membrane as a helical span at residues 358-378 (LLMSMFALLAHWMACIWYVIG). At 379 to 419 (KMEREDNSLLKWEVGWLHELGKRLESPYYGNNTLGGPSIRS) the chain is on the extracellular side. N-linked (GlcNAc...) asparagine glycosylation is present at N409. Residues 420 to 440 (AYIAALYFTLSSLTSVGFGNV) constitute an intramembrane region (pore-forming). The Selectivity filter signature appears at 434–439 (SVGFGN). Over 441–448 (SANTDAEK) the chain is Extracellular. Residues 449 to 469 (IFSICTMLIGALMHALVFGNV) traverse the membrane as a helical segment. Residues 470–1107 (TAIIQRMYSR…EVKDNKAINV (638 aa)) lie on the Cytoplasmic side of the membrane. The tract at residues 551 to 668 (LFECASRGCL…HKFVEDIQHD (118 aa)) is cNMP-binding domain. Residues 686-702 (SNKSMVSQSEPKGNGNI) show a composition bias toward polar residues. Disordered stretches follow at residues 686–742 (SNKS…NKKV), 764–791 (HSPI…KRKE), 818–847 (EDGN…PPLG), and 961–989 (VDPS…YHSP). Positions 710–724 (VEDEEEEEEGEEEEA) are enriched in acidic residues. Residues 961–972 (VDPSSVGSSPQR) show a composition bias toward polar residues.

This sequence belongs to the potassium channel family. H (Eag) (TC 1.A.1.20) subfamily. Kv12.1/KCNH8 sub-subfamily. In terms of assembly, the potassium channel is probably composed of a homo- or heterotetrameric complex of pore-forming alpha subunits that can associate with modulating beta subunits. In terms of tissue distribution, primarily expressed in the nervous system.

Its subcellular location is the membrane. It catalyses the reaction K(+)(in) = K(+)(out). Its function is as follows. Pore-forming (alpha) subunit of a voltage-gated delayed rectifier potassium channel that mediates outward-rectifying potassium currents. Elicits a slowly activating, non-inactivating and slowly deactivation outwards potassium current at depolarizating voltages from -30 mV to +50mV. Shows no obvious change in the activation rate from different holding potentials. Activation is strongly dependent on the pH of the external solution. The polypeptide is Voltage-gated delayed rectifier potassium channel KCNH8 (Homo sapiens (Human)).